The following is a 363-amino-acid chain: Phosphoserine aminotransferase (363 aa).

Arg-42 serves as a coordination point for L-glutamate. Residues 76-77 (GR), Trp-102, Thr-156, Asp-175, and Gln-198 each bind pyridoxal 5'-phosphate. The residue at position 199 (Lys-199) is an N6-(pyridoxal phosphate)lysine. 240 to 241 (NT) is a binding site for pyridoxal 5'-phosphate.

The protein belongs to the class-V pyridoxal-phosphate-dependent aminotransferase family. SerC subfamily. As to quaternary structure, homodimer. Pyridoxal 5'-phosphate serves as cofactor.

The protein resides in the cytoplasm. The enzyme catalyses O-phospho-L-serine + 2-oxoglutarate = 3-phosphooxypyruvate + L-glutamate. It catalyses the reaction 4-(phosphooxy)-L-threonine + 2-oxoglutarate = (R)-3-hydroxy-2-oxo-4-phosphooxybutanoate + L-glutamate. Its pathway is amino-acid biosynthesis; L-serine biosynthesis; L-serine from 3-phospho-D-glycerate: step 2/3. It participates in cofactor biosynthesis; pyridoxine 5'-phosphate biosynthesis; pyridoxine 5'-phosphate from D-erythrose 4-phosphate: step 3/5. Functionally, catalyzes the reversible conversion of 3-phosphohydroxypyruvate to phosphoserine and of 3-hydroxy-2-oxo-4-phosphonooxybutanoate to phosphohydroxythreonine. The polypeptide is Phosphoserine aminotransferase (Shewanella sp. (strain W3-18-1)).